A 102-amino-acid polypeptide reads, in one-letter code: Small ribosomal subunit protein uS10 (102 aa).

This sequence belongs to the universal ribosomal protein uS10 family. Part of the 30S ribosomal subunit.

In terms of biological role, involved in the binding of tRNA to the ribosomes. The protein is Small ribosomal subunit protein uS10 of Bacillus thuringiensis (strain Al Hakam).